The following is a 344-amino-acid chain: L-threonine 3-dehydrogenase (344 aa).

A Zn(2+)-binding site is contributed by cysteine 42. Residues threonine 44 and histidine 47 each act as charge relay system in the active site. Positions 67, 68, 97, 100, 103, and 111 each coordinate Zn(2+). Residues isoleucine 179, aspartate 199, arginine 204, 266–268 (LGI), and 290–291 (IY) contribute to the NAD(+) site.

It belongs to the zinc-containing alcohol dehydrogenase family. As to quaternary structure, homotetramer. Zn(2+) is required as a cofactor.

Its subcellular location is the cytoplasm. It catalyses the reaction L-threonine + NAD(+) = (2S)-2-amino-3-oxobutanoate + NADH + H(+). It participates in amino-acid degradation; L-threonine degradation via oxydo-reductase pathway; glycine from L-threonine: step 1/2. Functionally, catalyzes the NAD(+)-dependent oxidation of L-threonine to 2-amino-3-ketobutyrate. In Chelativorans sp. (strain BNC1), this protein is L-threonine 3-dehydrogenase.